We begin with the raw amino-acid sequence, 225 residues long: THAP domain-containing protein 1 B (225 aa).

The THAP-type zinc-finger motif lies at 5 to 57 (CSAYGCKNRYDKDRPISFHKFPLKRPLLCKKWEAAVRRADFKPTKYSSICSDH). Residues 139-194 (VEDTVHQRRRIQQLEEQVDKLRKKLKIANQKCRRQERSLEKLEKEVSEYREAKGSG) are a coiled coil.

Belongs to the THAP1 family.

The protein localises to the nucleus. It is found in the nucleoplasm. In terms of biological role, DNA-binding transcription regulator that regulates endothelial cell proliferation and G1/S cell-cycle progression. Specifically binds the 5'-[AT]NTNN[GT]GGCA[AGT]-3' core DNA sequence and acts by modulating expression of pRB-E2F cell-cycle target genes. This Xenopus laevis (African clawed frog) protein is THAP domain-containing protein 1 B (thap1-b).